Reading from the N-terminus, the 323-residue chain is MFTSSAAKTGRRRASTAKKSEDELVVDRVPNLIDGSISSGPISTGPDSDQNNKKKLPNPFAPKINNLGKDGQTIEQGSMLENKSRENEGDGGSPECVTPNHTDIGTSLGQVTTKGNECHDKYIGRGSPPNERGGSRPSQERGDSFVAIKYPSMLTTLAVMLNYDIHNLYEFMMAVLNVTKELNDPNVLVERAVFDAMQYSRSRGIGDRESYSMFCYMIHGYASLMRLAEEPWSDGVSSNESEIHIKASDMKKSVGVTLTVKPNSLWVCNKNDFARLICIFTLPDDIIAFLRTDGEDCYGGSNIYVGLDISKPPYIPLRDVEEP.

A disordered region spans residues 1–142 (MFTSSAAKTG…GGSRPSQERG (142 aa)). A compositionally biased stretch (low complexity) spans 33–49 (IDGSISSGPISTGPDSD). Residues 99 to 115 (PNHTDIGTSLGQVTTKG) show a composition bias toward polar residues.

The protein resides in the host cytoplasm. Constituent of viral factories. The polypeptide is Non-structural protein 9 (Rice gall dwarf virus (RGDV)).